Consider the following 364-residue polypeptide: Dual-specificity RNA methyltransferase RlmN (364 aa).

The Proton acceptor role is filled by Glu-91. One can recognise a Radical SAM core domain in the interval 97–333; that stretch reads ESDRGTLCIS…VTVRKTRGDD (237 aa). Cysteines 104 and 338 form a disulfide. Positions 111, 115, and 118 each coordinate [4Fe-4S] cluster. S-adenosyl-L-methionine is bound by residues 164 to 165, Ser-196, 218 to 220, and Asn-295; these read GE and SLH. The active-site S-methylcysteine intermediate is the Cys-338.

Belongs to the radical SAM superfamily. RlmN family. The cofactor is [4Fe-4S] cluster.

The protein localises to the cytoplasm. The enzyme catalyses adenosine(2503) in 23S rRNA + 2 reduced [2Fe-2S]-[ferredoxin] + 2 S-adenosyl-L-methionine = 2-methyladenosine(2503) in 23S rRNA + 5'-deoxyadenosine + L-methionine + 2 oxidized [2Fe-2S]-[ferredoxin] + S-adenosyl-L-homocysteine. It catalyses the reaction adenosine(37) in tRNA + 2 reduced [2Fe-2S]-[ferredoxin] + 2 S-adenosyl-L-methionine = 2-methyladenosine(37) in tRNA + 5'-deoxyadenosine + L-methionine + 2 oxidized [2Fe-2S]-[ferredoxin] + S-adenosyl-L-homocysteine. In terms of biological role, specifically methylates position 2 of adenine 2503 in 23S rRNA and position 2 of adenine 37 in tRNAs. m2A2503 modification seems to play a crucial role in the proofreading step occurring at the peptidyl transferase center and thus would serve to optimize ribosomal fidelity. The sequence is that of Dual-specificity RNA methyltransferase RlmN from Neisseria gonorrhoeae (strain ATCC 700825 / FA 1090).